A 197-amino-acid polypeptide reads, in one-letter code: Amino-terminal enhancer of split (197 aa).

The segment covering 1-15 (MMFPQSSSRHSGSSH) has biased composition (low complexity). Disordered regions lie at residues 1-20 (MMFP…PQQL) and 169-197 (LGSQ…DKSD). Positions 166–197 (LSALGSQGHLPKEDKNGHEGDRRPDDDGDKSD) are CCN domain. Over residues 175 to 197 (LPKEDKNGHEGDRRPDDDGDKSD) the composition is skewed to basic and acidic residues.

Belongs to the WD repeat Groucho/TLE family. Monomer. Ubiquitinated by XIAP/BIRC4. As to expression, predominantly expressed in brain, testis and ovary. Ubiquitously expressed in the developing embryo. Present in unfertilized and fertilized eggs.

The protein resides in the nucleus. Functionally, may act as a transcriptional corepressor. Has a possible role in the negative regulation of proteins containing WD-40 repeats. May be required for the initiation and maintenance of the differentiated state. The polypeptide is Amino-terminal enhancer of split (aes) (Xenopus laevis (African clawed frog)).